Here is a 102-residue protein sequence, read N- to C-terminus: ATP-dependent Clp protease adapter protein ClpS (102 aa).

Belongs to the ClpS family. In terms of assembly, binds to the N-terminal domain of the chaperone ClpA.

Functionally, involved in the modulation of the specificity of the ClpAP-mediated ATP-dependent protein degradation. This Desulfotalea psychrophila (strain LSv54 / DSM 12343) protein is ATP-dependent Clp protease adapter protein ClpS.